A 403-amino-acid chain; its full sequence is MKSVEEQLALIKRGADELLVEAELVEKLKRGQPLRIKAGFDPTAPDLHLGHTVLINKLRQFQDLGHQVIFLIGDFTGMIGDPSGKSATRPPLTREQVLDYAETYKSQVFKILDPAKTEVAFNSTWMDKLSPADFIRLSSQYTVARMLERDDFDKRYKSNQSIAIHEFLYPLVQGYDSVALKADVELGGTDQKFNLLMGRELQRAYGQEPQCILTMPLLEGLDGVKKMSKSLGNYVGIQEAPGIMYSKLVSIPDSLMWRYFELLSFRSMEEINGLRADCEAGANPRDIKIKLAEELVARFHGEEAAATAHRSAGNRMKEGELPDDLPEISVAAIEDMPISAVLNKAGLVKNAAVARDLLASGGVRIDGEVVDRSFIVKLGATHVCQAGKKAFGRITLVSDESSK.

The 'HIGH' region signature appears at 42 to 51; that stretch reads PTAPDLHLGH. Residues 226–230 carry the 'KMSKS' region motif; that stretch reads KMSKS. Lys229 is a binding site for ATP. Positions 336–396 constitute an S4 RNA-binding domain; that stretch reads MPISAVLNKA…GKKAFGRITL (61 aa).

The protein belongs to the class-I aminoacyl-tRNA synthetase family. TyrS type 2 subfamily. In terms of assembly, homodimer.

It localises to the cytoplasm. The enzyme catalyses tRNA(Tyr) + L-tyrosine + ATP = L-tyrosyl-tRNA(Tyr) + AMP + diphosphate + H(+). Its function is as follows. Catalyzes the attachment of tyrosine to tRNA(Tyr) in a two-step reaction: tyrosine is first activated by ATP to form Tyr-AMP and then transferred to the acceptor end of tRNA(Tyr). In Pseudomonas syringae pv. tomato (strain ATCC BAA-871 / DC3000), this protein is Tyrosine--tRNA ligase.